The chain runs to 357 residues: 4-hydroxy-3-methylbut-2-en-1-yl diphosphate synthase (flavodoxin) (357 aa).

[4Fe-4S] cluster is bound by residues C264, C267, C299, and E306.

This sequence belongs to the IspG family. [4Fe-4S] cluster serves as cofactor.

It carries out the reaction (2E)-4-hydroxy-3-methylbut-2-enyl diphosphate + oxidized [flavodoxin] + H2O + 2 H(+) = 2-C-methyl-D-erythritol 2,4-cyclic diphosphate + reduced [flavodoxin]. The protein operates within isoprenoid biosynthesis; isopentenyl diphosphate biosynthesis via DXP pathway; isopentenyl diphosphate from 1-deoxy-D-xylulose 5-phosphate: step 5/6. Its function is as follows. Converts 2C-methyl-D-erythritol 2,4-cyclodiphosphate (ME-2,4cPP) into 1-hydroxy-2-methyl-2-(E)-butenyl 4-diphosphate. The protein is 4-hydroxy-3-methylbut-2-en-1-yl diphosphate synthase (flavodoxin) of Campylobacter jejuni subsp. jejuni serotype O:2 (strain ATCC 700819 / NCTC 11168).